The following is a 957-amino-acid chain: Histone-lysine N-methyltransferase, H3 lysine-9 specific SUVH3 (957 aa).

The 171-residue stretch at 73–243 folds into the YDG domain; sequence GHPPGVALGD…PQVCKFLMHG (171 aa). Residues 182 to 209 form a disordered region; it reads EAGGGEGGGGGEGGGGAKKGKGGKGGGK. Residues 183 to 198 are compositionally biased toward gly residues; it reads AGGGEGGGGGEGGGGA. The region spanning 319 to 441 is the Pre-SET domain; that stretch reads DVSGGQEAVP…HECGDGCSAK (123 aa). The SET domain maps to 455-920; the sequence is LPLEVFMTES…QLEELSYNYG (466 aa). Disordered stretches follow at residues 552 to 595, 611 to 647, and 783 to 805; these read DAAR…GGAE, AAGTAPGAGDNMDGVEGPAAQRSGGEEAAAGPGSSGA, and PPALPSTSDVGNGGTTGSGGGGG. A compositionally biased stretch (low complexity) spans 560 to 578; sequence QQPQQQQPQQQQQQPAAGG. Over residues 793–805 the composition is skewed to gly residues; that stretch reads GNGGTTGSGGGGG. The 17-residue stretch at 941 to 957 folds into the Post-SET domain; sequence FVMQCNCGAVGCIGNLM.

It belongs to the class V-like SAM-binding methyltransferase superfamily. Histone-lysine methyltransferase family. Suvar3-9 subfamily.

The protein localises to the nucleus. The protein resides in the chromosome. It carries out the reaction L-lysyl(9)-[histone H3] + S-adenosyl-L-methionine = N(6)-methyl-L-lysyl(9)-[histone H3] + S-adenosyl-L-homocysteine + H(+). Histone methyltransferase. Monomethylates specifically 'Lys-9' of histone H3. H3 'Lys-9Me1' (H3K9me1) functions as an epigenetic mark of repressed chromatin. The sequence is that of Histone-lysine N-methyltransferase, H3 lysine-9 specific SUVH3 (SUVH3) from Chlamydomonas reinhardtii (Chlamydomonas smithii).